The following is an 819-amino-acid chain: Leucine--tRNA ligase (819 aa).

Residues 36-46 (PYPSGKIHMGH) carry the 'HIGH' region motif. The 'KMSKS' region signature appears at 586-590 (KMSKS). An ATP-binding site is contributed by K589.

This sequence belongs to the class-I aminoacyl-tRNA synthetase family.

It localises to the cytoplasm. The enzyme catalyses tRNA(Leu) + L-leucine + ATP = L-leucyl-tRNA(Leu) + AMP + diphosphate. This is Leucine--tRNA ligase from Wolbachia pipientis subsp. Culex pipiens (strain wPip).